The primary structure comprises 24 residues: FLPIIASVAAKVFSKIFCAISKKC.

The cysteines at positions 18 and 24 are disulfide-linked.

As to expression, expressed by the skin glands.

The protein resides in the secreted. Antibacterial activity against Gram-positive bacterium S.aureus and Gram-negative bacterium E.coli. Has activity against C.albicans. This is Brevinin-1Pc from Lithobates pipiens (Northern leopard frog).